We begin with the raw amino-acid sequence, 1331 residues long: MTDTATGVHSNANGVEKVPTPVFSIEGEPTQETAPTRMDPFDRPKNDNDPFEDALKRCHKILEKLDCPFVTGKEKDLDESDDMTENEDHDEMANEDDGIPSNEKKVETRKMDCTSGQLLAPKLPEKAESISSASESSEDSESVAILKYTVRTCYAIWKKRQKNSEIALKGLMIVLELCLSQPSARDDAFSALLETLGYNTVTFWKAVVPQIYNSDLSYATQYREALLFSLVLYDVNHSKNRLRELYAAVPGVRQSMLGIRAKQFGERYRHLQMKIARSRASSRMSSKMGSEENLPAMASMMNDVVFDEEPHTQSPLVDMSHDKQRVINVSNAPPVSISRKTSGSWEIKQGSGGLVACVDPVMSADKKNIWLSNLGVNMQEELKEHSTSTNSLGLPLIKQACAGEVFCVLERNEKKEELTPKQQAVESDMSLLSVLNTYNKHSYQLNPVVVNQDDYNTYYGGISNGLLWPALHNLPQYISPCFDDPELLREQWCAYVRVNYLFAINAARNSRAQDFIWIHDYHLMLCGQIMRSLESSLDIGFFIHIPFQPPANFMTKYKTVADPIMRALLRFTKVGFQTSRDRDTFVKLVAKHIKRTKIEYDSRLDRYTIEHDGWTCSLGVFPVSIKIADFVNIAKNPQTIIEAEEIKKQIMGRSADGGQLFFSVERFDYTKGISEKLRAWQRYFEKYPDRIGKDVLFQVAVTNRRSVDSYRQYQDDVLAVADLINQKFKSEDYPEWKPVIFETDGLPRTRLIAHYLAMDIGVVTPSKDGMNLVAKEMLVCNPTASLVLSTGAGTEVQLSNAQFYSEQEGKCYHRVEEISNTEAFADNFFAAATESKETRTKHGEKINQFLCVHDIDEWSDQFLDPKWTHEVISQCEVKQLGQFYGLMSRTAQVRRQIVECVLKGLPIRPHFRYSLENAKNSLESSCKSGTKLSLEADEESGEEKGFEITYDIHDELSEMEKDLAFLAFIQSDEYENAEEFIKTLGSFYEGGPVLFKNEVKQAAEMLQQGIHYNTFFTDRDGTLKSYACSYPTSVQPAYSAVIQAQFARRCATFCAIVTTAPLLHTGILEVATIPEGYYAYGASAGREWYLNPAQQFKDRSFSAIDLNLMNKVFDIIEELLERPEFRIFKWIGSGIQKHCGHITIAKQDVNGTIPSRKVIRLYEQLVKIVNDFDPNGTTLTMRESDLDFKIYVKAKLKGRIFNKGHGIRLVRERLKPNMSKGNCLVCGDNESDIPMLEECLKLAGSKVYTIWVTADTNLQEKVTQLCDRFSCSNIHFVSCPQVLLGAMAYATAHTLVDERNRKLDYYYDSDTPMDQEESSTLGASLGTSFGN.

A compositionally biased stretch (polar residues) spans 1–13; sequence MTDTATGVHSNAN. Disordered stretches follow at residues 1–50, 71–118, and 1312–1331; these read MTDT…DNDP, TGKE…SGQL, and PMDQEESSTLGASLGTSFGN. Basic and acidic residues predominate over residues 39–50; the sequence is DPFDRPKNDNDP. A compositionally biased stretch (acidic residues) spans 77 to 98; that stretch reads LDESDDMTENEDHDEMANEDDG. Positions 102-112 are enriched in basic and acidic residues; it reads NEKKVETRKMD. Polar residues predominate over residues 1318 to 1331; the sequence is SSTLGASLGTSFGN.

The protein in the N-terminal section; belongs to the glycosyltransferase 20 family. This sequence in the C-terminal section; belongs to the gob-1 trehalose phosphatase family.

It catalyses the reaction D-glucose 6-phosphate + UDP-alpha-D-glucose = alpha,alpha-trehalose 6-phosphate + UDP + H(+). In terms of biological role, catalyzes the production of trehalose from glucose-6-phosphate and UDP-alpha-D-glucose in a 2 step process. This chain is Alpha,alpha-trehalose-phosphate synthase [UDP-forming] 1 (tps-1), found in Caenorhabditis elegans.